A 200-amino-acid polypeptide reads, in one-letter code: Recombination protein RecR (200 aa).

The C4-type zinc finger occupies 59–74; that stretch reads CGTCGSLDVTDPCAVC. The region spanning 82-177 is the Toprim domain; the sequence is RLLCVVEEVG…PVTMLARGVP (96 aa).

The protein belongs to the RecR family.

In terms of biological role, may play a role in DNA repair. It seems to be involved in an RecBC-independent recombinational process of DNA repair. It may act with RecF and RecO. This Caulobacter vibrioides (strain ATCC 19089 / CIP 103742 / CB 15) (Caulobacter crescentus) protein is Recombination protein RecR.